The primary structure comprises 172 residues: Disulfide bond formation protein B (172 aa).

Topologically, residues 1–16 (MNLFASLNQFSKNRIS) are cytoplasmic. A helical membrane pass occupies residues 17-33 (WLLLLLFVVFFEGAALF). The Periplasmic portion of the chain corresponds to 34–51 (FQHVMMLSPCVMCIYERV). C43 and C46 are disulfide-bonded. The chain crosses the membrane as a helical span at residues 52–67 (AMLGVGGAALFGLIAP). Residues 68–74 (NNPLVRW) lie on the Cytoplasmic side of the membrane. A helical membrane pass occupies residues 75–92 (LGLAAWGASAYKGLALSL). Residues 93–147 (QHVDYQFNPSPFATCDLFVTFPDWAPLNQWAPWMFEAYGDCSKIVWQFMTLSMPQ) are Periplasmic-facing. The cysteines at positions 107 and 133 are disulfide-linked. The helical transmembrane segment at 148 to 166 (WLVIIFAGNLVALAFIVIA) threads the bilayer. At 167-172 (QFFKSK) the chain is on the cytoplasmic side.

Belongs to the DsbB family.

The protein resides in the cell inner membrane. Required for disulfide bond formation in some periplasmic proteins. Acts by oxidizing the DsbA protein. The sequence is that of Disulfide bond formation protein B from Vibrio vulnificus (strain CMCP6).